Reading from the N-terminus, the 93-residue chain is Alpha-defensin 26 (93 aa).

An N-terminal signal peptide occupies residues 1-19; it reads MKTLVLLSALFLLAFQVQA. The propeptide occupies 20–58; it reads DPIQNTDEETNTEVQPQEEDQAVSVSFGNPEGSDLQEES. The tract at residues 24-55 is disordered; that stretch reads NTDEETNTEVQPQEEDQAVSVSFGNPEGSDLQ. Acidic residues predominate over residues 25–40; the sequence is TDEETNTEVQPQEEDQ. 3 cysteine pairs are disulfide-bonded: C64-C92, C66-C81, and C71-C91.

The protein belongs to the alpha-defensin family.

The protein localises to the secreted. May have microbicidal activities. This is Alpha-defensin 26 (Defa26) from Mus musculus (Mouse).